The following is a 536-amino-acid chain: Trigger factor (536 aa).

Residues G164–T249 enclose the PPIase FKBP-type domain. Residues I439–K536 form a disordered region. Positions T472–A502 are enriched in basic and acidic residues. Low complexity predominate over residues K503–A515. Over residues A516–K525 the composition is skewed to basic and acidic residues. The span at A527–K536 shows a compositional bias: basic residues.

This sequence belongs to the FKBP-type PPIase family. Tig subfamily.

The protein localises to the cytoplasm. The enzyme catalyses [protein]-peptidylproline (omega=180) = [protein]-peptidylproline (omega=0). Involved in protein export. Acts as a chaperone by maintaining the newly synthesized protein in an open conformation. Functions as a peptidyl-prolyl cis-trans isomerase. The chain is Trigger factor from Sphingopyxis alaskensis (strain DSM 13593 / LMG 18877 / RB2256) (Sphingomonas alaskensis).